Here is a 210-residue protein sequence, read N- to C-terminus: MTKGCFITVEGGEGAGKTSALDAIEEMLRENGLSVVRTREPGGIPIAEQIRSIILDVDHTRMDPRTEALLYAAARRQHLVEKVLPALEAGHVVLCDRFIDSSLAYQGYARGIGFEDILAINEFAIEGRYPDLTLLFRVDPDVGLSRIHRDQSREQNRLDQEALTFHQKVKEGYERIVETYPERVVEIDANQSFDQVVADAVRMIKQRLSL.

Position 11 to 18 (11 to 18 (GGEGAGKT)) interacts with ATP.

The protein belongs to the thymidylate kinase family.

The enzyme catalyses dTMP + ATP = dTDP + ADP. Functionally, phosphorylation of dTMP to form dTDP in both de novo and salvage pathways of dTTP synthesis. The chain is Thymidylate kinase (tmk) from Halalkalibacterium halodurans (strain ATCC BAA-125 / DSM 18197 / FERM 7344 / JCM 9153 / C-125) (Bacillus halodurans).